Reading from the N-terminus, the 1333-residue chain is NPC1-like intracellular cholesterol transporter 1 (1333 aa).

Positions 1–20 (MAAAWQGWLLWALLLNSAQG) are cleaved as a signal peptide. Over 21–284 (ELYTPTHKAG…SFYMGRMPGW (264 aa)) the chain is Extracellular. Disulfide bonds link cysteine 32–cysteine 90, cysteine 38–cysteine 56, cysteine 77–cysteine 125, cysteine 91–cysteine 129, cysteine 113–cysteine 254, cysteine 116–cysteine 172, cysteine 189–cysteine 197, cysteine 243–cysteine 259, and cysteine 256–cysteine 263. Residues 285–305 (LALIIIFTAVFVLLSVVLVYL) traverse the membrane as a helical segment. At 306-352 (RVASNRNKNKTAGSQEAPNLPRKRRFSPHTVLGRFFESWGTRVASWP) the chain is on the cytoplasmic side. Residues 353–373 (LTVLALSFIVVIALSVGLTFI) traverse the membrane as a helical segment. Topologically, residues 374-632 (ELTTDPVELW…DEINRTTIQD (259 aa)) are extracellular. 2 disulfide bridges follow: cysteine 471–cysteine 485 and cysteine 525–cysteine 542. Residues 632 to 797 (DLPVFAISYL…MTAFVALLSL (166 aa)) form the SSD domain. The chain crosses the membrane as a helical span at residues 633–653 (LPVFAISYLIVFLYISLALGS). Topologically, residues 654–665 (YSRWSRVAVDSK) are cytoplasmic. A helical membrane pass occupies residues 666-686 (ATLGLGGVAVVLGAVVAAMGF). Over 687–696 (YSYLGVPSSL) the chain is Extracellular. Residues 697–717 (VIIQVVPFLVLAVGADNIFIF) form a helical membrane-spanning segment. Topologically, residues 718-742 (VLEYQRLPRMPGEQREAHIGRTLGS) are cytoplasmic. Residues 743–763 (VAPSMLLCSLSEAICFFLGAL) traverse the membrane as a helical segment. Over 764 to 776 (TSMPAVRTFALTS) the chain is Extracellular. A helical membrane pass occupies residues 777–797 (GLAIIFDFLLQMTAFVALLSL). Residues 798 to 846 (DSKRQEASRPDVVCCFSSRNLPPPKQKEGLLLCFFRKIYTPFLLHRFIR) lie on the Cytoplasmic side of the membrane. The helical transmembrane segment at 847 to 867 (PVVLLLFLVLFGANLYLMCNI) threads the bilayer. The Extracellular segment spans residues 868–1113 (SVGLDQDLAL…QQYLTVLPEG (246 aa)). Disulfide bonds link cysteine 920–cysteine 925, cysteine 967–cysteine 1025, and cysteine 981–cysteine 990. The helical transmembrane segment at 1114–1134 (IFTLALCFVPTFVVCYLLLGL) threads the bilayer. Topologically, residues 1135-1142 (DIRSGILN) are cytoplasmic. The helical transmembrane segment at 1143 to 1163 (LLSIIMILVDTIGLMAVWGIS) threads the bilayer. The Extracellular portion of the chain corresponds to 1164-1165 (YN). Residues 1166-1186 (AVSLINLVTAVGMSVEFVSHI) form a helical membrane-spanning segment. The Cytoplasmic segment spans residues 1187-1206 (TRSFAVSTKPTRLERAKDAT). A helical transmembrane segment spans residues 1207–1227 (IFMGSAVFAGVAMTNFPGILI). Residues 1228 to 1242 (LGFAQAQLIQIFFFR) lie on the Extracellular side of the membrane. The chain crosses the membrane as a helical span at residues 1243–1263 (LNLLITLLGLLHGLVFLPVVL). Residues 1264 to 1333 (SYLGPDVNQA…SSLPKSDQKF (70 aa)) are Cytoplasmic-facing.

This sequence belongs to the patched family. Interacts with RAB11A, MYO5B and RAB11FIP2. Interaction with RAB11A, MYO5B and RAB11FIP2 is required for proper transport to the plasma membrane upon cholesterol depletion. Interacts with NPC2. Interacts with LIMA1. Highly glycosylated. In terms of tissue distribution, expressed in small intestine, stomach and muscle, along with detectable expression in lung, heart, gall bladder, brain, testis, skin and liver. Expression in liver is extremely low.

Its subcellular location is the apical cell membrane. It localises to the cell membrane. It catalyses the reaction cholesterol(in) = cholesterol(out). It carries out the reaction sitosterol(out) = sitosterol(in). In terms of biological role, plays a major role in cholesterol homeostasis. Critical for the uptake of cholesterol across the plasma membrane of the intestinal enterocyte. Involved in plant sterol absorption, it transports sitosterol, although at lower rates than cholesterol. May have a function in the transport of multiple lipids and their homeostasis, thereby influencing lipid metabolism regulation. May be involved in caveolin trafficking from the plasma membrane. Acts as a negative regulator of NPC2 and down-regulates its expression and secretion by inhibiting its maturation and accelerating its degradation. The polypeptide is NPC1-like intracellular cholesterol transporter 1 (Mus musculus (Mouse)).